The sequence spans 424 residues: Glutamyl-tRNA reductase (424 aa).

Substrate-binding positions include 49 to 52 (TCNR), Ser108, 113 to 115 (EPQ), and Gln119. Cys50 functions as the Nucleophile in the catalytic mechanism. 188–193 (GAGETI) provides a ligand contact to NADP(+).

This sequence belongs to the glutamyl-tRNA reductase family. As to quaternary structure, homodimer.

It carries out the reaction (S)-4-amino-5-oxopentanoate + tRNA(Glu) + NADP(+) = L-glutamyl-tRNA(Glu) + NADPH + H(+). The protein operates within porphyrin-containing compound metabolism; protoporphyrin-IX biosynthesis; 5-aminolevulinate from L-glutamyl-tRNA(Glu): step 1/2. Catalyzes the NADPH-dependent reduction of glutamyl-tRNA(Glu) to glutamate 1-semialdehyde (GSA). This Hahella chejuensis (strain KCTC 2396) protein is Glutamyl-tRNA reductase.